Consider the following 141-residue polypeptide: UPF0310 protein SGO_1818 (141 aa).

The protein belongs to the UPF0310 family.

This Streptococcus gordonii (strain Challis / ATCC 35105 / BCRC 15272 / CH1 / DL1 / V288) protein is UPF0310 protein SGO_1818.